The sequence spans 408 residues: NADH-quinone oxidoreductase subunit D (408 aa).

It belongs to the complex I 49 kDa subunit family. NDH-1 is composed of 14 different subunits. Subunits NuoB, C, D, E, F, and G constitute the peripheral sector of the complex.

Its subcellular location is the cell inner membrane. It catalyses the reaction a quinone + NADH + 5 H(+)(in) = a quinol + NAD(+) + 4 H(+)(out). Functionally, NDH-1 shuttles electrons from NADH, via FMN and iron-sulfur (Fe-S) centers, to quinones in the respiratory chain. The immediate electron acceptor for the enzyme in this species is believed to be ubiquinone. Couples the redox reaction to proton translocation (for every two electrons transferred, four hydrogen ions are translocated across the cytoplasmic membrane), and thus conserves the redox energy in a proton gradient. The polypeptide is NADH-quinone oxidoreductase subunit D (Campylobacter jejuni subsp. jejuni serotype O:6 (strain 81116 / NCTC 11828)).